The following is a 267-amino-acid chain: tRNA pseudouridine synthase A (267 aa).

Residue Asp55 is the Nucleophile of the active site. Tyr111 serves as a coordination point for substrate.

Belongs to the tRNA pseudouridine synthase TruA family.

It carries out the reaction uridine(38/39/40) in tRNA = pseudouridine(38/39/40) in tRNA. Its function is as follows. Formation of pseudouridine at positions 38, 39 and 40 in the anticodon stem and loop of transfer RNAs. The chain is tRNA pseudouridine synthase A from Thermococcus kodakarensis (strain ATCC BAA-918 / JCM 12380 / KOD1) (Pyrococcus kodakaraensis (strain KOD1)).